The primary structure comprises 302 residues: Glycine--tRNA ligase alpha subunit (302 aa).

Belongs to the class-II aminoacyl-tRNA synthetase family. Tetramer of two alpha and two beta subunits.

Its subcellular location is the cytoplasm. The catalysed reaction is tRNA(Gly) + glycine + ATP = glycyl-tRNA(Gly) + AMP + diphosphate. This chain is Glycine--tRNA ligase alpha subunit, found in Xanthomonas oryzae pv. oryzae (strain PXO99A).